The primary structure comprises 185 residues: Ribosome-recycling factor (185 aa).

It belongs to the RRF family.

It is found in the cytoplasm. Functionally, responsible for the release of ribosomes from messenger RNA at the termination of protein biosynthesis. May increase the efficiency of translation by recycling ribosomes from one round of translation to another. In Bacillus pumilus (strain SAFR-032), this protein is Ribosome-recycling factor.